Consider the following 447-residue polypeptide: ATP-dependent protease ATPase subunit HslU (447 aa).

Residues isoleucine 17, 59-64 (GVGKTE), aspartate 256, glutamate 321, and arginine 393 each bind ATP.

It belongs to the ClpX chaperone family. HslU subfamily. As to quaternary structure, a double ring-shaped homohexamer of HslV is capped on each side by a ring-shaped HslU homohexamer. The assembly of the HslU/HslV complex is dependent on binding of ATP.

The protein localises to the cytoplasm. ATPase subunit of a proteasome-like degradation complex; this subunit has chaperone activity. The binding of ATP and its subsequent hydrolysis by HslU are essential for unfolding of protein substrates subsequently hydrolyzed by HslV. HslU recognizes the N-terminal part of its protein substrates and unfolds these before they are guided to HslV for hydrolysis. The protein is ATP-dependent protease ATPase subunit HslU of Pseudomonas putida (strain GB-1).